The primary structure comprises 255 residues: Menaquinol:cytochrome c reductase cytochrome c subunit (255 aa).

A run of 3 helical transmembrane segments spans residues 46-62 (WMVG…LTIV), 104-124 (VVGA…APFL), and 137-157 (VAVG…WQSV). The Cytochrome c domain occupies 178–253 (DTNAEGYKVF…ELAKFISETT (76 aa)). Positions 192, 195, and 196 each coordinate heme c.

This sequence belongs to the cytochrome b family. The main subunits of the menaquinol:cytochrome c complex are a Rieske-type iron-sulfur protein (QcrA), a cytochrome b (QcrB) and a cytochrome c (QcrC). Requires heme c as cofactor.

The protein resides in the cell membrane. Its function is as follows. Component of the menaquinol:cytochrome c reductase complex. This chain is Menaquinol:cytochrome c reductase cytochrome c subunit (qcrC), found in Bacillus subtilis (strain 168).